The chain runs to 589 residues: Aspartate--tRNA ligase (589 aa).

An L-aspartate-binding site is contributed by Glu174. The tract at residues 198 to 201 (QLFK) is aspartate. Position 220 (Arg220) interacts with L-aspartate. Residues 220-222 (RDE) and Gln229 contribute to the ATP site. His448 is a binding site for L-aspartate. Glu483 lines the ATP pocket. Arg490 lines the L-aspartate pocket. An ATP-binding site is contributed by 535-538 (GIDR).

This sequence belongs to the class-II aminoacyl-tRNA synthetase family. Type 1 subfamily. In terms of assembly, homodimer.

Its subcellular location is the cytoplasm. It carries out the reaction tRNA(Asp) + L-aspartate + ATP = L-aspartyl-tRNA(Asp) + AMP + diphosphate. Its function is as follows. Catalyzes the attachment of L-aspartate to tRNA(Asp) in a two-step reaction: L-aspartate is first activated by ATP to form Asp-AMP and then transferred to the acceptor end of tRNA(Asp). The chain is Aspartate--tRNA ligase from Xylella fastidiosa (strain 9a5c).